The primary structure comprises 48 residues: Large ribosomal subunit protein bL33A (48 aa).

Belongs to the bacterial ribosomal protein bL33 family.

In Exiguobacterium sibiricum (strain DSM 17290 / CCUG 55495 / CIP 109462 / JCM 13490 / 255-15), this protein is Large ribosomal subunit protein bL33A.